The following is a 217-amino-acid chain: tRNA (guanine-N(7)-)-methyltransferase (217 aa).

Residues Glu-43, Asp-68, Asn-101, and Asn-123 each contribute to the S-adenosyl-L-methionine site. Substrate is bound at residue Lys-127. The interval 129–134 (KHNKRR) is interaction with RNA. Substrate-binding positions include Asp-159 and 196–199 (TEYE).

It belongs to the class I-like SAM-binding methyltransferase superfamily. TrmB family.

It catalyses the reaction guanosine(46) in tRNA + S-adenosyl-L-methionine = N(7)-methylguanosine(46) in tRNA + S-adenosyl-L-homocysteine. It participates in tRNA modification; N(7)-methylguanine-tRNA biosynthesis. Catalyzes the formation of N(7)-methylguanine at position 46 (m7G46) in tRNA. In Clostridium botulinum (strain Okra / Type B1), this protein is tRNA (guanine-N(7)-)-methyltransferase.